We begin with the raw amino-acid sequence, 248 residues long: Ubiquinone biosynthesis O-methyltransferase (248 aa).

R41, G72, D93, and M136 together coordinate S-adenosyl-L-methionine.

This sequence belongs to the methyltransferase superfamily. UbiG/COQ3 family.

The enzyme catalyses a 3-demethylubiquinol + S-adenosyl-L-methionine = a ubiquinol + S-adenosyl-L-homocysteine + H(+). The catalysed reaction is a 3-(all-trans-polyprenyl)benzene-1,2-diol + S-adenosyl-L-methionine = a 2-methoxy-6-(all-trans-polyprenyl)phenol + S-adenosyl-L-homocysteine + H(+). It participates in cofactor biosynthesis; ubiquinone biosynthesis. Functionally, O-methyltransferase that catalyzes the 2 O-methylation steps in the ubiquinone biosynthetic pathway. In Brucella anthropi (strain ATCC 49188 / DSM 6882 / CCUG 24695 / JCM 21032 / LMG 3331 / NBRC 15819 / NCTC 12168 / Alc 37) (Ochrobactrum anthropi), this protein is Ubiquinone biosynthesis O-methyltransferase.